The primary structure comprises 384 residues: Lipid-A-disaccharide synthase 1 (384 aa).

Belongs to the LpxB family.

The enzyme catalyses a lipid X + a UDP-2-N,3-O-bis[(3R)-3-hydroxyacyl]-alpha-D-glucosamine = a lipid A disaccharide + UDP + H(+). It functions in the pathway bacterial outer membrane biogenesis; LPS lipid A biosynthesis. Functionally, condensation of UDP-2,3-diacylglucosamine and 2,3-diacylglucosamine-1-phosphate to form lipid A disaccharide, a precursor of lipid A, a phosphorylated glycolipid that anchors the lipopolysaccharide to the outer membrane of the cell. In Legionella pneumophila subsp. pneumophila (strain Philadelphia 1 / ATCC 33152 / DSM 7513), this protein is Lipid-A-disaccharide synthase 1.